Consider the following 70-residue polypeptide: Protein SlyX homolog (70 aa).

It belongs to the SlyX family.

This Shewanella sediminis (strain HAW-EB3) protein is Protein SlyX homolog.